The sequence spans 237 residues: B3 domain-containing protein Os06g0194400 (237 aa).

Disordered stretches follow at residues 1–23 and 38–82; these read MIEA…RQVE and SAAV…LPEK. Residues 139-230 constitute a DNA-binding region (TF-B3); it reads FVKPMLQSHV…KFKVYIIRAS (92 aa).

The protein localises to the nucleus. This Oryza sativa subsp. japonica (Rice) protein is B3 domain-containing protein Os06g0194400.